We begin with the raw amino-acid sequence, 796 residues long: Cation/H(+) antiporter 6B (796 aa).

Transmembrane regions (helical) follow at residues 54-74 (DFWE…FLLW), 93-113 (SMML…IPCL), 131-151 (IGAF…DVGI), 159-179 (SVVI…LLYS), 194-213 (YTVM…NMLL), 223-243 (FGQI…FLTV), 259-279 (LAFM…LWVI), 285-305 (GAPV…LSYL), 310-330 (FLFF…NGPP), 344-364 (EGIF…WSFL), 382-402 (FSFL…AALA), 411-431 (IILG…VLTA), and 444-464 (LLGV…HFLY).

Belongs to the monovalent cation:proton antiporter 2 (CPA2) transporter (TC 2.A.37) family. CHX (TC 2.A.37.4) subfamily. As to expression, preferentially expressed in pollen.

Its subcellular location is the membrane. In terms of biological role, may operate as a cation/H(+) antiporter. The sequence is that of Cation/H(+) antiporter 6B (CHX6b) from Arabidopsis thaliana (Mouse-ear cress).